A 691-amino-acid chain; its full sequence is Solute carrier family 28 member 3 (691 aa).

Positions 1–78 (MELRSTAAPR…HMEDDDEEMQ (78 aa)) are disordered. Residues 1-102 (MELRSTAAPR…FCRKHKTTLR (102 aa)) are Cytoplasmic-facing. Low complexity predominate over residues 21–30 (NEENFLENEN). Polar residues predominate over residues 31–42 (TSGNNSIRSRAV). The span at 43-54 (QSREHTNTKQDE) shows a compositional bias: basic and acidic residues. The chain crosses the membrane as a helical span at residues 103 to 123 (HIIWGILLAGYLVMVISACVL). Over 124–128 (NFHRA) the chain is Extracellular. A helical transmembrane segment spans residues 129–149 (LPLFVITVAAIFFVVWDHLMA). Residues 150–173 (KYEHRIDEMLSPGRRLLNSHWFWL) are Cytoplasmic-facing. A helical transmembrane segment spans residues 174–194 (KWVIWSSLVLAVIFWLAFDTA). Over 195–197 (KLG) the chain is Extracellular. The helical transmembrane segment at 198–219 (QQQLVSFGGLIMYIVLLFLFSK) threads the bilayer. Residues 220-227 (YPTRVYWR) lie on the Cytoplasmic side of the membrane. Residues 228-247 (PVLWGIGLQFLLGLLILRTD) form a helical membrane-spanning segment. At 248–284 (PGFIAFDWLGRQVQTFLEYTDAGASFVFGEKYKDHFF) the chain is on the extracellular side. The chain crosses the membrane as a helical span at residues 285–305 (AFKVLPIVVFFSTVMSMLYYL). The Cytoplasmic segment spans residues 306–329 (GLMQWIIRKVGWIMLVTTGSSPIE). The segment at residues 330–348 (SVVASGNIFVGQTESPLLV) is an intramembrane region (helical). Residues 349 to 361 (RPYLPYITKSELH) are Cytoplasmic-facing. The chain crosses the membrane as a helical span at residues 362–384 (AIMTAGFSTIAGSVLGAYISFGV). Residues 385–386 (PS) lie on the Extracellular side of the membrane. The helical transmembrane segment at 387 to 408 (SHLLTASVMSAPASLAAAKLFW) threads the bilayer. Residues 409–443 (PETEKPKITLKNAMKMESGDSGNLLEAATQGASSS) are Cytoplasmic-facing. A helical membrane pass occupies residues 444–469 (ISLVANIAVNLIAFLALLSFMNSALS). At 470–507 (WFGNMFDYPQLSFELICSYIFMPFSFMMGVEWQDSFMV) the chain is on the extracellular side. An intramembrane region (helical) is located at residues 508–527 (ARLIGYKTFFNEFVAYEHLS). Residues 528-566 (KWIHLRKEGGPKFVNGVQQYISIRSEIIATYALCGFANI) are Extracellular-facing. A helical membrane pass occupies residues 567 to 577 (GSLGIVIGGLT). Residues 578-590 (SMAPSRKRDIASG) are Cytoplasmic-facing. Residues 591-613 (AVRALIAGTVACFMTACIAGILS) form a helical membrane-spanning segment. Residues 614–691 (STPVDINCHH…FNCNGISNTF (78 aa)) lie on the Extracellular side of the membrane.

It belongs to the concentrative nucleoside transporter (CNT) (TC 2.A.41) family. In terms of assembly, homotrimer. As to expression, expressed in pancreas, bone marrow, trachea, mammary gland, liver, prostate, and regions of intestine, brain, lung, placenta, testis, kidney, and heart.

It is found in the cell membrane. It localises to the endoplasmic reticulum membrane. It catalyses the reaction thymidine(out) + 2 Na(+)(out) = thymidine(in) + 2 Na(+)(in). The catalysed reaction is cytidine(out) + 2 Na(+)(out) = cytidine(in) + 2 Na(+)(in). It carries out the reaction uridine(out) + 2 Na(+)(out) = uridine(in) + 2 Na(+)(in). The enzyme catalyses adenosine(out) + 2 Na(+)(out) = adenosine(in) + 2 Na(+)(in). It catalyses the reaction guanosine(out) + 2 Na(+)(out) = guanosine(in) + 2 Na(+)(in). The catalysed reaction is inosine(out) + 2 Na(+)(out) = inosine(in) + 2 Na(+)(in). Functionally, sodium-dependent, pyrimidine- and purine-selective. Involved in the homeostasis of endogenous nucleosides. Exhibits the transport characteristics of the nucleoside transport system cib or N3 subtype (N3/cib) (with marked transport of both thymidine and inosine). Employs a 2:1 sodium/nucleoside ratio. Transports uridine. Also able to transport gemcitabine, 3'-azido-3'-deoxythymidine (AZT), ribavirin and 3-deazauridine. The protein is Solute carrier family 28 member 3 (SLC28A3) of Homo sapiens (Human).